A 434-amino-acid polypeptide reads, in one-letter code: Probable zinc metalloprotease PTRG_04772 (434 aa).

Asparagine 88 is a glycosylation site (N-linked (GlcNAc...) asparagine). Residues histidine 111, aspartate 131, and glutamate 164 each contribute to the Zn(2+) site. Residue asparagine 179 is glycosylated (N-linked (GlcNAc...) asparagine). Aspartate 191 contacts Zn(2+). Asparagine 220, asparagine 299, asparagine 347, asparagine 353, asparagine 390, and asparagine 395 each carry an N-linked (GlcNAc...) asparagine glycan. One can recognise a Fibronectin type-III domain in the interval 340-433; it reads SPTNVGINTT…LPFPFGCARN (94 aa).

The protein belongs to the peptidase M28 family. M28B subfamily. The cofactor is Zn(2+).

The protein resides in the secreted. In Pyrenophora tritici-repentis (strain Pt-1C-BFP) (Wheat tan spot fungus), this protein is Probable zinc metalloprotease PTRG_04772.